The primary structure comprises 241 residues: Glutamate/aspartate import ATP-binding protein GltL (241 aa).

The ABC transporter domain maps to 2–236 (ITLKNVSKWY…PKSDRAKDFL (235 aa)). 34 to 41 (GPSGSGKS) contacts ATP.

Belongs to the ABC transporter superfamily. In terms of assembly, the complex is composed of two ATP-binding proteins (GltL), two transmembrane proteins (GltJ and GltK) and a solute-binding protein (GltI).

It localises to the cell inner membrane. It carries out the reaction a polar amino acid(out) + ATP + H2O = a polar amino acid(in) + ADP + phosphate + H(+). It catalyses the reaction L-glutamate(out) + ATP + H2O = L-glutamate(in) + ADP + phosphate + H(+). The enzyme catalyses L-aspartate(out) + ATP + H2O = L-aspartate(in) + ADP + phosphate + H(+). Part of the ABC transporter complex GltIJKL involved in glutamate and aspartate uptake. Probably responsible for energy coupling to the transport system. This chain is Glutamate/aspartate import ATP-binding protein GltL (gltL), found in Escherichia coli O157:H7.